The sequence spans 200 residues: MQLNVNDAQAIEVSELTFGGEFNETLVHQAVVAYMAGGRQGSKQQKTRSDVRGGGKRPWRQKGTGRARAGTIRSPIWRGGGTTFAARPQDHTQKLNKKMYRAALRSILAELVRTDRLVVVQDFAVEAPKTKDLLNKLTGMGLTDVLIVSDAVDQNLYLAARNLPHVDVRDVQGSDPVSLIAYDKVLITVSAVKKFEELLG.

The disordered stretch occupies residues 38–68 (GRQGSKQQKTRSDVRGGGKRPWRQKGTGRAR). The span at 54–65 (GGKRPWRQKGTG) shows a compositional bias: basic residues.

It belongs to the universal ribosomal protein uL4 family. As to quaternary structure, part of the 50S ribosomal subunit.

One of the primary rRNA binding proteins, this protein initially binds near the 5'-end of the 23S rRNA. It is important during the early stages of 50S assembly. It makes multiple contacts with different domains of the 23S rRNA in the assembled 50S subunit and ribosome. Functionally, forms part of the polypeptide exit tunnel. The polypeptide is Large ribosomal subunit protein uL4 (Pseudomonas syringae pv. tomato (strain ATCC BAA-871 / DC3000)).